A 187-amino-acid polypeptide reads, in one-letter code: Oleosin Zm-II (187 aa).

Ala2 is subject to N-acetylalanine. The tract at residues 2-51 is polar; that stretch reads ADRDRSGIYGGAHATYGQQQQQGGGGRPMGEQVKKGMLHDKGPTASQALT. The segment at 17–42 is disordered; that stretch reads YGQQQQQGGGGRPMGEQVKKGMLHDK. Over residues 33 to 42 the composition is skewed to basic and acidic residues; that stretch reads QVKKGMLHDK. Helical transmembrane passes span 50–70, 83–103, and 104–124; these read LTVA…GLAL, VFLI…TAVM, and GFLT…CLAN. The tract at residues 52-123 is hydrophobic; that stretch reads VATLFPLGGL…GGLSSLTCLA (72 aa). The segment covering 155-169 has biased composition (low complexity); sequence TAQAGQAIQGRAQEA. The interval 155-187 is disordered; that stretch reads TAQAGQAIQGRAQEAGTGGGAGAGAGGGGRASS. Gly residues predominate over residues 170 to 187; the sequence is GTGGGAGAGAGGGGRASS.

It belongs to the oleosin family. In terms of processing, the N-terminus is blocked. In terms of tissue distribution, found in embryonic axis, scutellum, and aleurone layer.

It is found in the lipid droplet. Its subcellular location is the membrane. Functionally, may have a structural role to stabilize the lipid body during desiccation of the seed by preventing coalescence of the oil. Probably interacts with both lipid and phospholipid moieties of lipid bodies. May also provide recognition signals for specific lipase anchorage in lipolysis during seedling growth. This is Oleosin Zm-II (OLE18) from Zea mays (Maize).